The following is a 32-amino-acid chain: Natriuretic peptide Coa_NP2 (32 aa).

The cysteines at positions 8 and 24 are disulfide-linked.

This sequence belongs to the natriuretic peptide family. Snake NP subfamily. Expressed by the venom gland.

The protein localises to the secreted. Its function is as follows. Snake venom natriuretic peptide that exhibits hypotensive and vasorelaxant effects. Produces a dose-dependent hypotension in rats, followed by significant increases in concentrations of markers of nitric oxide (NO) formation measured in the plasma and vasorelaxation in a thoracic aortic ring bath. The peptide may exert its hypotensive action, at least in part, through stimulation of NO production. The vasorelaxant effect is endothelium-dependent and does not appear to be mediated by the natriuretic peptide receptor-A, as its action is not modified by isatin (a potent NPR1 antagonist). May act by activating the natriuretic peptide receptor-B (NPR2). This chain is Natriuretic peptide Coa_NP2, found in Crotalus lutosus abyssus (Grand Canyon rattlesnake).